A 401-amino-acid chain; its full sequence is Exodeoxyribonuclease 7 large subunit (401 aa).

It belongs to the XseA family. In terms of assembly, heterooligomer composed of large and small subunits.

The protein resides in the cytoplasm. The catalysed reaction is Exonucleolytic cleavage in either 5'- to 3'- or 3'- to 5'-direction to yield nucleoside 5'-phosphates.. Functionally, bidirectionally degrades single-stranded DNA into large acid-insoluble oligonucleotides, which are then degraded further into small acid-soluble oligonucleotides. This chain is Exodeoxyribonuclease 7 large subunit, found in Syntrophotalea carbinolica (strain DSM 2380 / NBRC 103641 / GraBd1) (Pelobacter carbinolicus).